Consider the following 358-residue polypeptide: Protein IncC (358 aa).

A disordered region spans residues 1-101 (MGAIHEETAN…VGSRRQEETG (101 aa)). Basic and acidic residues predominate over residues 88–99 (HRQEVGSRRQEE).

The protein belongs to the ParA family.

Its function is as follows. This is one of the proteins encoded by the trfB operon; it is involved in plasmid maintenance and replication. The protein is Protein IncC (incC) of Escherichia coli.